Consider the following 491-residue polypeptide: Acetyl-coenzyme A carboxylase carboxyl transferase subunit beta, chloroplastic (491 aa).

Residues 229–491 (LWVQCENCYG…FQLHGFFPLT (263 aa)) form the CoA carboxyltransferase N-terminal domain. Cysteine 233, cysteine 236, cysteine 252, and cysteine 255 together coordinate Zn(2+). The C4-type zinc finger occupies 233 to 255 (CENCYGLNYKQFFRSRLNICEHC).

The protein belongs to the AccD/PCCB family. Acetyl-CoA carboxylase is a heterohexamer composed of biotin carboxyl carrier protein, biotin carboxylase and 2 subunits each of ACCase subunit alpha and ACCase plastid-coded subunit beta (accD). Zn(2+) serves as cofactor.

It is found in the plastid. Its subcellular location is the chloroplast stroma. It carries out the reaction N(6)-carboxybiotinyl-L-lysyl-[protein] + acetyl-CoA = N(6)-biotinyl-L-lysyl-[protein] + malonyl-CoA. The protein operates within lipid metabolism; malonyl-CoA biosynthesis; malonyl-CoA from acetyl-CoA: step 1/1. Its function is as follows. Component of the acetyl coenzyme A carboxylase (ACC) complex. Biotin carboxylase (BC) catalyzes the carboxylation of biotin on its carrier protein (BCCP) and then the CO(2) group is transferred by the transcarboxylase to acetyl-CoA to form malonyl-CoA. This Lemna minor (Common duckweed) protein is Acetyl-coenzyme A carboxylase carboxyl transferase subunit beta, chloroplastic.